The chain runs to 638 residues: Chaperone protein HtpG (638 aa).

Residues 1-346 (MSQQETHGFQ…SNDLPLNVSR (346 aa)) are a; substrate-binding. The segment at 347–563 (EILQDNKVTT…EGEMSTQMIK (217 aa)) is b. The c stretch occupies residues 564–638 (LMEAAGQAVP…MNEMLLAKLK (75 aa)).

It belongs to the heat shock protein 90 family. As to quaternary structure, homodimer.

It is found in the cytoplasm. Its function is as follows. Molecular chaperone. Has ATPase activity. The polypeptide is Chaperone protein HtpG (Shewanella sediminis (strain HAW-EB3)).